Here is an 829-residue protein sequence, read N- to C-terminus: Probable receptor-like protein kinase At5g59700 (829 aa).

Residues 1-24 (MGGEKFGFLIWILSIPCLIFLCYG) form the signal peptide. Over 25–406 (YVPVDNYLIN…SSTTKKNVGM (382 aa)) the chain is Extracellular. N-linked (GlcNAc...) asparagine glycans are attached at residues Asn40, Asn216, Asn279, and Asn380. The helical transmembrane segment at 407 to 427 (IIGLTIGSLLALVVLGGFFVL) threads the bilayer. Over 428-829 (YKKRGRDQDG…FSQLIKSEGR (402 aa)) the chain is Cytoplasmic. In terms of domain architecture, Protein kinase spans 482-755 (FDENRAIGVG…GDVLWNLEYA (274 aa)). ATP is bound by residues 488–496 (IGVGGFGKV) and Lys510. Asp606 serves as the catalytic Proton acceptor.

The protein belongs to the protein kinase superfamily. Ser/Thr protein kinase family.

It is found in the cell membrane. In Arabidopsis thaliana (Mouse-ear cress), this protein is Probable receptor-like protein kinase At5g59700.